A 552-amino-acid chain; its full sequence is Asparagine--tRNA ligase, cytoplasmic (552 aa).

Positions 1–23 are disordered; the sequence is MSQVYVNEKTGADSTDVSGSEQQ. Polar residues predominate over residues 12–23; sequence ADSTDVSGSEQQ.

This sequence belongs to the class-II aminoacyl-tRNA synthetase family.

The protein localises to the cytoplasm. It carries out the reaction tRNA(Asn) + L-asparagine + ATP = L-asparaginyl-tRNA(Asn) + AMP + diphosphate + H(+). This is Asparagine--tRNA ligase, cytoplasmic (DED81) from Debaryomyces hansenii (strain ATCC 36239 / CBS 767 / BCRC 21394 / JCM 1990 / NBRC 0083 / IGC 2968) (Yeast).